We begin with the raw amino-acid sequence, 295 residues long: Xyloglucan endotransglucosylase/hydrolase (295 aa).

The N-terminal stretch at 1 to 23 (MAVSSTPWALVALFLMASSTVMA) is a signal peptide. A GH16 domain is found at 25 to 222 (PPRKAIDVPF…WANAPFIASY (198 aa)). Residue E108 is the Nucleophile of the active site. The active-site Proton donor is the E112. E112 contacts xyloglucan. N-linked (GlcNAc...) asparagine glycosylation occurs at N116. Xyloglucan-binding positions include 125–127 (QTN), 135–137 (NRE), 201–202 (DW), and G206. 2 disulfides stabilise this stretch: C230–C239 and C276–C289. Residue R281 coordinates xyloglucan.

Belongs to the glycosyl hydrolase 16 family. XTH group 1 subfamily. In terms of processing, contains at least one intrachain disulfide bond essential for its enzymatic activity. The N-glycan consists of an (GlcNAc)2(Hex)6 oligosaccharide; not essential for its enzymatic activity.

It localises to the secreted. The protein resides in the cell wall. The protein localises to the extracellular space. Its subcellular location is the apoplast. It catalyses the reaction breaks a beta-(1-&gt;4) bond in the backbone of a xyloglucan and transfers the xyloglucanyl segment on to O-4 of the non-reducing terminal glucose residue of an acceptor, which can be a xyloglucan or an oligosaccharide of xyloglucan.. Functionally, catalyzes xyloglucan endohydrolysis (XEH) and/or endotransglycosylation (XET). Cleaves and religates xyloglucan polymers, an essential constituent of the primary cell wall, and thereby participates in cell wall construction of growing tissues. This chain is Xyloglucan endotransglucosylase/hydrolase (XET16A), found in Brassica oleracea var. botrytis (Cauliflower).